Consider the following 981-residue polypeptide: DNA ligase 4 (981 aa).

Residues Glu-320, Lys-322, Arg-327, Glu-380, Phe-424, Glu-484, Lys-489, Lys-506, and Lys-508 each coordinate ATP. Residue Lys-322 is the N6-AMP-lysine intermediate of the active site. Position 380 (Glu-380) interacts with Mg(2+). Glu-484 serves as a coordination point for Mg(2+). A disordered region spans residues 544-563; it reads SEKNNPSSYESGSDSDSDSE. 2 BRCT domains span residues 721 to 819 and 875 to 980; these read SKAD…PKYV and ERLL…EYAA.

The protein belongs to the ATP-dependent DNA ligase family. The cofactor is Mg(2+).

It is found in the nucleus. The catalysed reaction is ATP + (deoxyribonucleotide)n-3'-hydroxyl + 5'-phospho-(deoxyribonucleotide)m = (deoxyribonucleotide)n+m + AMP + diphosphate.. Its function is as follows. DNA ligase involved in DNA non-homologous end joining (NHEJ); required for double-strand break (DSB) repair. In Eremothecium gossypii (strain ATCC 10895 / CBS 109.51 / FGSC 9923 / NRRL Y-1056) (Yeast), this protein is DNA ligase 4 (LIG4).